The chain runs to 131 residues: Period circadian protein (131 aa).

The tract at residues 29 to 109 is disordered; sequence VTAPVELDPP…NSAGGASGGV (81 aa). Residues 71–93 are compositionally biased toward low complexity; that stretch reads SGNFTTGSNVRMSSVTNTSNAGT. The segment covering 94 to 109 has biased composition (gly residues); that stretch reads GTSGGGNSAGGASGGV.

As to quaternary structure, forms a heterodimer with timeless (TIM); the complex then translocates into the nucleus. Phosphorylated with a circadian rhythmicity, probably by the double-time protein (dbt). Phosphorylation could be implicated in the stability of per monomer and in the formation of heterodimer per-tim.

The protein localises to the nucleus. The protein resides in the cytoplasm. It localises to the perinuclear region. Its function is as follows. Essential for biological clock functions. Determines the period length of circadian and ultradian rhythms; an increase in PER dosage leads to shortened circadian rhythms and a decrease leads to lengthened circadian rhythms. Essential for the circadian rhythmicity of locomotor activity, eclosion behavior, and for the rhythmic component of the male courtship song that originates in the thoracic nervous system. The biological cycle depends on the rhythmic formation and nuclear localization of the TIM-PER complex. Light induces the degradation of TIM, which promotes elimination of PER. Nuclear activity of the heterodimer coordinatively regulates PER and TIM transcription through a negative feedback loop. Behaves as a negative element in circadian transcriptional loop. Does not appear to bind DNA, suggesting indirect transcriptional inhibition. The polypeptide is Period circadian protein (per) (Zaprionus tuberculatus (Vinegar fly)).